We begin with the raw amino-acid sequence, 72 residues long: Translation initiation factor IF-1 (72 aa).

Positions 1 to 72 (MARDDVIEVD…DKGRITFRYK (72 aa)) constitute an S1-like domain.

It belongs to the IF-1 family. Component of the 30S ribosomal translation pre-initiation complex which assembles on the 30S ribosome in the order IF-2 and IF-3, IF-1 and N-formylmethionyl-tRNA(fMet); mRNA recruitment can occur at any time during PIC assembly.

It is found in the cytoplasm. In terms of biological role, one of the essential components for the initiation of protein synthesis. Stabilizes the binding of IF-2 and IF-3 on the 30S subunit to which N-formylmethionyl-tRNA(fMet) subsequently binds. Helps modulate mRNA selection, yielding the 30S pre-initiation complex (PIC). Upon addition of the 50S ribosomal subunit IF-1, IF-2 and IF-3 are released leaving the mature 70S translation initiation complex. The chain is Translation initiation factor IF-1 from Helicobacter pylori (strain HPAG1).